A 474-amino-acid chain; its full sequence is Trifunctional enzyme subunit beta, mitochondrial (474 aa).

The transit peptide at 1–33 (MTILTYPFKNLPTASKWALRFSIRPLSCSSQLR) directs the protein to the mitochondrion. Lys72 is modified (N6-acetyllysine; alternate). Lys72 bears the N6-succinyllysine; alternate mark. Cys138 serves as the catalytic Acyl-thioester intermediate. The stretch at 173–220 (IRHSRKMRKLMLDLNKAKSMGQRLSLISKFRFNFLAPELPAVSEFSTS) is an intramembrane region. The residue at position 188 (Lys188) is an N6-acetyllysine; alternate. Lys188 carries the N6-succinyllysine; alternate modification. 3 positions are modified to N6-succinyllysine: Lys190, Lys272, and Lys291. Lys293 carries the post-translational modification N6-acetyllysine; alternate. N6-succinyllysine; alternate is present on Lys293. The residue at position 298 (Lys298) is an N6-acetyllysine. Lys332 is subject to N6-acetyllysine; alternate. Residue Lys332 is modified to N6-succinyllysine; alternate. N6-acetyllysine is present on residues Lys348 and Lys361. Cys458 functions as the Proton donor/acceptor in the catalytic mechanism.

It belongs to the thiolase-like superfamily. Thiolase family. As to quaternary structure, heterotetramer of 2 alpha/HADHA and 2 beta/HADHB subunits; forms the mitochondrial trifunctional enzyme. Also purified as higher order heterooligomers including a 4 alpha/HADHA and 4 beta/HADHB heterooligomer which physiological significance remains unclear. The mitochondrial trifunctional enzyme interacts with MTLN. Interacts with RSAD2/viperin.

It localises to the mitochondrion. The protein localises to the mitochondrion inner membrane. It is found in the mitochondrion outer membrane. Its subcellular location is the endoplasmic reticulum. It carries out the reaction an acyl-CoA + acetyl-CoA = a 3-oxoacyl-CoA + CoA. The enzyme catalyses butanoyl-CoA + acetyl-CoA = 3-oxohexanoyl-CoA + CoA. It catalyses the reaction hexanoyl-CoA + acetyl-CoA = 3-oxooctanoyl-CoA + CoA. The catalysed reaction is octanoyl-CoA + acetyl-CoA = 3-oxodecanoyl-CoA + CoA. It carries out the reaction decanoyl-CoA + acetyl-CoA = 3-oxododecanoyl-CoA + CoA. The enzyme catalyses dodecanoyl-CoA + acetyl-CoA = 3-oxotetradecanoyl-CoA + CoA. It catalyses the reaction tetradecanoyl-CoA + acetyl-CoA = 3-oxohexadecanoyl-CoA + CoA. It participates in lipid metabolism; fatty acid beta-oxidation. Mitochondrial trifunctional enzyme catalyzes the last three of the four reactions of the mitochondrial beta-oxidation pathway. The mitochondrial beta-oxidation pathway is the major energy-producing process in tissues and is performed through four consecutive reactions breaking down fatty acids into acetyl-CoA. Among the enzymes involved in this pathway, the trifunctional enzyme exhibits specificity for long-chain fatty acids. Mitochondrial trifunctional enzyme is a heterotetrameric complex composed of two proteins, the trifunctional enzyme subunit alpha/HADHA carries the 2,3-enoyl-CoA hydratase and the 3-hydroxyacyl-CoA dehydrogenase activities, while the trifunctional enzyme subunit beta/HADHB described here bears the 3-ketoacyl-CoA thiolase activity. The polypeptide is Trifunctional enzyme subunit beta, mitochondrial (HADHB) (Homo sapiens (Human)).